We begin with the raw amino-acid sequence, 729 residues long: Transient receptor potential cation channel subfamily V member 5 (729 aa).

Residues 1 to 327 (MGGFLPKAEG…SFKWNKYGRP (327 aa)) are Cytoplasmic-facing. ANK repeat units follow at residues 44 to 74 (ILES…DVRQ), 78 to 107 (LGET…ELVF), 116 to 145 (AGQT…SVSA), 162 to 191 (FGEH…DIRA), 195 to 228 (LGNT…HGDH), and 239 to 268 (QGLT…HIQW). A helical transmembrane segment spans residues 328 to 348 (YFCILAALYLLYMICFTTCCV). Residues 349–385 (YRPLKFRGGNRTHSRDITILQQKLLQEAYETREDIIR) are Extracellular-facing. Asn-358 is a glycosylation site (N-linked (GlcNAc...) asparagine). A helical membrane pass occupies residues 386–408 (LVGELVSIVGAVIILLLEIPDIF). Topologically, residues 409–419 (RVGASRYFGKT) are cytoplasmic. Residues 420 to 442 (ILGGPFHVIIITYASLVLVTMVM) form a helical membrane-spanning segment. Over 443 to 448 (RLTNTN) the chain is Extracellular. The helical transmembrane segment at 449 to 469 (GEVVPMSFALVLGWCSVMYFT) threads the bilayer. The Cytoplasmic segment spans residues 470 to 492 (RGFQMLGPFTIMIQKMIFGDLMR). A helical transmembrane segment spans residues 493–513 (FCWLMAVVILGFASAFYIIFQ). Positions 524 to 544 (YDYPMALFTTFELFLTVIDAP) form an intramembrane region, pore-forming. Residue Asp-542 coordinates Ca(2+). A helical transmembrane segment spans residues 557–577 (IVNFAFTIIATLLMLNLFIAM). Residues 578–729 (MGDTHWRVAQ…EGDGEEVYHF (152 aa)) are Cytoplasmic-facing. The interaction with S100A10 stretch occupies residues 598–602 (VATTV). An involved in Ca(2+)-dependent inactivation region spans residues 650–653 (VFKN). The span at 654–665 (SDKEDDQEHPSE) shows a compositional bias: basic and acidic residues. A disordered region spans residues 654 to 675 (SDKEDDQEHPSEKQPSGAESGT). Thr-685 is subject to Phosphothreonine. Ser-689 is subject to Phosphoserine. The involved in Ca(2+)-dependent inactivation stretch occupies residues 700 to 729 (GWEILRQNTLGHLNLGLNLSEGDGEEVYHF).

It belongs to the transient receptor (TC 1.A.4) family. TrpV subfamily. TRPV5 sub-subfamily. Homotetramer and probably heterotetramer with TRPV6. Interacts with TRPV6. Interacts with S100A10 and probably with the ANAX2-S100A10 heterotetramer. The interaction with S100A10 is required for the trafficking to the plasma membrane. Interacts with calmodulin. Interacts with BSPRY, which results in its inactivation. In terms of processing, glycosylated. In terms of tissue distribution, expressed at high levels in kidney, small intestine and pancreas, and at lower levels in testis, prostate, placenta, brain, colon and rectum.

The protein localises to the apical cell membrane. It carries out the reaction Ca(2+)(in) = Ca(2+)(out). Activated by WNK3. In terms of biological role, constitutively active calcium selective cation channel thought to be involved in Ca(2+) reabsorption in kidney and intestine. Required for normal Ca(2+) reabsorption in the kidney distal convoluted tubules. The channel is activated by low internal calcium level and the current exhibits an inward rectification. A Ca(2+)-dependent feedback regulation includes fast channel inactivation and slow current decay. Heteromeric assembly with TRPV6 seems to modify channel properties. TRPV5-TRPV6 heteromultimeric concatemers exhibit voltage-dependent gating. The protein is Transient receptor potential cation channel subfamily V member 5 (TRPV5) of Homo sapiens (Human).